Reading from the N-terminus, the 794-residue chain is Protein SEY1 (794 aa).

At 1–687 (MMEVIDSVLG…KRSIIKTTTA (687 aa)) the chain is on the cytoplasmic side. The 230-residue stretch at 43-272 (GLDYHVISVF…ANPYYFKPQY (230 aa)) folds into the GB1/RHD3-type G domain. 53–60 (GSQSSGKS) contributes to the GTP binding site. Residues 331–352 (VDHILDDREKLGEVLKNLKQEC) adopt a coiled-coil conformation. The helical transmembrane segment at 688-708 (IPIWMYLLVVALGWNEFVMVL) threads the bilayer. The Lumenal portion of the chain corresponds to 709-711 (RNP). A helical transmembrane segment spans residues 712 to 732 (LLVTLVLLFGVGFIFVNKFGL). The Cytoplasmic segment spans residues 733-794 (WGPVLNVAHN…SDNEKIEKSE (62 aa)). Residues 770-794 (NSAGKESYEMKDMSDSDNEKIEKSE) form a disordered region. Positions 775–794 (ESYEMKDMSDSDNEKIEKSE) are enriched in basic and acidic residues.

The protein belongs to the TRAFAC class dynamin-like GTPase superfamily. GB1/RHD3 GTPase family. RHD3 subfamily.

The protein localises to the endoplasmic reticulum membrane. In terms of biological role, cooperates with the reticulon proteins and tubule-shaping DP1 family proteins to generate and maintain the structure of the tubular endoplasmic reticulum network. Has GTPase activity, which is required for its function in ER organization. The sequence is that of Protein SEY1 from Zygosaccharomyces rouxii (strain ATCC 2623 / CBS 732 / NBRC 1130 / NCYC 568 / NRRL Y-229).